Consider the following 396-residue polypeptide: Peptide chain release factor 1, mitochondrial (396 aa).

The residue at position 268 (Gln268) is an N5-methylglutamine. Residues 317–340 (LEKEEKERNARKDQVSTTDRSDKI) are disordered.

This sequence belongs to the prokaryotic/mitochondrial release factor family. Methylation of glutamine in the GGQ triplet is conserved from bacteria to mammals.

The protein localises to the mitochondrion. In terms of biological role, mitochondrial peptide chain release factor that directs the termination of translation in response to the peptide chain termination codons UAA and UAG. The sequence is that of Peptide chain release factor 1, mitochondrial (MRF1) from Kluyveromyces lactis (strain ATCC 8585 / CBS 2359 / DSM 70799 / NBRC 1267 / NRRL Y-1140 / WM37) (Yeast).